We begin with the raw amino-acid sequence, 254 residues long: Major prion protein (254 aa).

Residues 1–22 (MANLSYWLLALFVATWTDVGLC) form the signal peptide. Residues 23–231 (KKRPKPGGWN…SQAYYDGRRS (209 aa)) are interaction with GRB2, ERI3 and SYN1. The tract at residues 25 to 108 (RPKPGGWNTG…WNKPNKPKTS (84 aa)) is disordered. Repeat copies occupy residues 51–59 (PQGGGTWGQ), 60–67 (PHGGGWGQ), 68–75 (PHGGGWGQ), 76–83 (PHGGGWGQ), and 84–91 (PHGGGWGQ). The 5 X 8 AA tandem repeats of P-H-G-G-G-W-G-Q stretch occupies residues 51–91 (PQGGGTWGQPHGGGWGQPHGGGWGQPHGGGWGQPHGGGWGQ). Positions 52 to 95 (QGGGTWGQPHGGGWGQPHGGGWGQPHGGGWGQPHGGGWGQGGGT) are enriched in gly residues. Residues His-61, Gly-62, Gly-63, His-69, Gly-70, Gly-71, His-77, Gly-78, Gly-79, His-85, Gly-86, and Gly-87 each coordinate Cu(2+). Residues 90–231 (GQGGGTHNQW…SQAYYDGRRS (142 aa)) form a prP27-30 (protease resistant core) region. Cysteines 179 and 214 form a disulfide. Residues Asn-181 and Asn-197 are each glycosylated (N-linked (GlcNAc...) asparagine). The GPI-anchor amidated serine moiety is linked to residue Ser-231. The propeptide at 232–254 (SAVLFSSPPVILLISFLIFLIVG) is removed in mature form.

It belongs to the prion family. In terms of assembly, monomer and homodimer. Has a tendency to aggregate into amyloid fibrils containing a cross-beta spine, formed by a steric zipper of superposed beta-strands. Soluble oligomers may represent an intermediate stage on the path to fibril formation. Copper binding may promote oligomerization. Interacts with GRB2, APP, ERI3/PRNPIP and SYN1. Mislocalized cytosolically exposed PrP interacts with MGRN1; this interaction alters MGRN1 subcellular location and causes lysosomal enlargement. Interacts with KIAA1191.

The protein localises to the cell membrane. It localises to the golgi apparatus. In terms of biological role, its primary physiological function is unclear. Has cytoprotective activity against internal or environmental stresses. May play a role in neuronal development and synaptic plasticity. May be required for neuronal myelin sheath maintenance. May play a role in iron uptake and iron homeostasis. Soluble oligomers are toxic to cultured neuroblastoma cells and induce apoptosis (in vitro). Association with GPC1 (via its heparan sulfate chains) targets PRNP to lipid rafts. Also provides Cu(2+) or Zn(2+) for the ascorbate-mediated GPC1 deaminase degradation of its heparan sulfate side chains. The sequence is that of Major prion protein (PRNP) from Nothocricetulus migratorius (Gray dwarf hamster).